The following is a 324-amino-acid chain: UDP-N-acetylenolpyruvoylglucosamine reductase (324 aa).

An FAD-binding PCMH-type domain is found at 39–220 (RTGGLAELFY…RAAMHEVALH (182 aa)). Residue Arg-185 is part of the active site. The active-site Proton donor is the Ser-234. Residue Glu-304 is part of the active site.

Belongs to the MurB family. FAD serves as cofactor.

It is found in the cytoplasm. The catalysed reaction is UDP-N-acetyl-alpha-D-muramate + NADP(+) = UDP-N-acetyl-3-O-(1-carboxyvinyl)-alpha-D-glucosamine + NADPH + H(+). It functions in the pathway cell wall biogenesis; peptidoglycan biosynthesis. Functionally, cell wall formation. This chain is UDP-N-acetylenolpyruvoylglucosamine reductase, found in Bartonella bacilliformis (strain ATCC 35685 / KC583 / Herrer 020/F12,63).